The sequence spans 186 residues: ATP synthase subunit delta (186 aa).

Belongs to the ATPase delta chain family. F-type ATPases have 2 components, F(1) - the catalytic core - and F(0) - the membrane proton channel. F(1) has five subunits: alpha(3), beta(3), gamma(1), delta(1), epsilon(1). CF(0) has four main subunits: a(1), b(1), b'(1) and c(10-14). The alpha and beta chains form an alternating ring which encloses part of the gamma chain. F(1) is attached to F(0) by a central stalk formed by the gamma and epsilon chains, while a peripheral stalk is formed by the delta, b and b' chains.

It localises to the cell inner membrane. F(1)F(0) ATP synthase produces ATP from ADP in the presence of a proton or sodium gradient. F-type ATPases consist of two structural domains, F(1) containing the extramembraneous catalytic core and F(0) containing the membrane proton channel, linked together by a central stalk and a peripheral stalk. During catalysis, ATP synthesis in the catalytic domain of F(1) is coupled via a rotary mechanism of the central stalk subunits to proton translocation. Functionally, this protein is part of the stalk that links CF(0) to CF(1). It either transmits conformational changes from CF(0) to CF(1) or is implicated in proton conduction. The sequence is that of ATP synthase subunit delta from Rhodospirillum rubrum (strain ATCC 11170 / ATH 1.1.1 / DSM 467 / LMG 4362 / NCIMB 8255 / S1).